Consider the following 161-residue polypeptide: SsrA-binding protein (161 aa).

Belongs to the SmpB family.

It is found in the cytoplasm. Required for rescue of stalled ribosomes mediated by trans-translation. Binds to transfer-messenger RNA (tmRNA), required for stable association of tmRNA with ribosomes. tmRNA and SmpB together mimic tRNA shape, replacing the anticodon stem-loop with SmpB. tmRNA is encoded by the ssrA gene; the 2 termini fold to resemble tRNA(Ala) and it encodes a 'tag peptide', a short internal open reading frame. During trans-translation Ala-aminoacylated tmRNA acts like a tRNA, entering the A-site of stalled ribosomes, displacing the stalled mRNA. The ribosome then switches to translate the ORF on the tmRNA; the nascent peptide is terminated with the 'tag peptide' encoded by the tmRNA and targeted for degradation. The ribosome is freed to recommence translation, which seems to be the essential function of trans-translation. This Psychromonas ingrahamii (strain DSM 17664 / CCUG 51855 / 37) protein is SsrA-binding protein.